The primary structure comprises 362 residues: Aminomethyltransferase (362 aa).

Belongs to the GcvT family. In terms of assembly, the glycine cleavage system is composed of four proteins: P, T, L and H.

The catalysed reaction is N(6)-[(R)-S(8)-aminomethyldihydrolipoyl]-L-lysyl-[protein] + (6S)-5,6,7,8-tetrahydrofolate = N(6)-[(R)-dihydrolipoyl]-L-lysyl-[protein] + (6R)-5,10-methylene-5,6,7,8-tetrahydrofolate + NH4(+). In terms of biological role, the glycine cleavage system catalyzes the degradation of glycine. The sequence is that of Aminomethyltransferase from Porphyromonas gingivalis (strain ATCC 33277 / DSM 20709 / CIP 103683 / JCM 12257 / NCTC 11834 / 2561).